Consider the following 371-residue polypeptide: Ligninase LG5 (371 aa).

Residues 1 to 21 form the signal peptide; it reads MAFKKLLAVLTAALSLRAAQG. A propeptide spanning residues 22–27 is cleaved from the precursor; sequence AAVEKR. 4 disulfides stabilise this stretch: cysteine 30–cysteine 42, cysteine 41–cysteine 311, cysteine 61–cysteine 146, and cysteine 275–cysteine 344. The Proton acceptor role is filled by histidine 74. Ca(2+)-binding residues include aspartate 75, glycine 92, aspartate 94, and serine 96. Histidine 202 is a heme b binding site. Ca(2+) contacts are provided by serine 203, aspartate 220, threonine 222, isoleucine 225, and aspartate 227. The N-linked (GlcNAc...) asparagine glycan is linked to asparagine 283. Positions 349–371 are disordered; it reads FPTLSTLPGPATSVARIPPPPGA.

This sequence belongs to the peroxidase family. Ligninase subfamily. The cofactor is Ca(2+). Heme b serves as cofactor.

It catalyses the reaction 1-(3,4-dimethoxyphenyl)-2-(2-methoxyphenoxy)propane-1,3-diol + H2O2 = 3,4-dimethoxybenzaldehyde + guaiacol + glycolaldehyde + H2O. It carries out the reaction 2 (3,4-dimethoxyphenyl)methanol + H2O2 = 2 (3,4-dimethoxyphenyl)methanol radical + 2 H2O. It functions in the pathway secondary metabolite metabolism; lignin degradation. Functionally, depolymerization of lignin. Catalyzes the C(alpha)-C(beta) cleavage of the propyl side chains of lignin. The protein is Ligninase LG5 (GLG5) of Phanerodontia chrysosporium (White-rot fungus).